The chain runs to 228 residues: 7-cyano-7-deazaguanine synthase (228 aa).

8–18 (LSGGLDSTTCL) lines the ATP pocket. Residues cysteine 188, cysteine 198, cysteine 201, and cysteine 204 each coordinate Zn(2+).

The protein belongs to the QueC family. Zn(2+) serves as cofactor.

It catalyses the reaction 7-carboxy-7-deazaguanine + NH4(+) + ATP = 7-cyano-7-deazaguanine + ADP + phosphate + H2O + H(+). Its pathway is purine metabolism; 7-cyano-7-deazaguanine biosynthesis. Functionally, catalyzes the ATP-dependent conversion of 7-carboxy-7-deazaguanine (CDG) to 7-cyano-7-deazaguanine (preQ(0)). This is 7-cyano-7-deazaguanine synthase from Legionella pneumophila subsp. pneumophila (strain Philadelphia 1 / ATCC 33152 / DSM 7513).